Here is a 450-residue protein sequence, read N- to C-terminus: Chromosomal replication initiator protein DnaA (450 aa).

The interval 1–84 is domain I, interacts with DnaA modulators; that stretch reads MTENEQIFWN…AVDYVYEDNL (84 aa). Residues 84–109 are domain II; that stretch reads LMIEQQHQGQQGYTEQAFQQLPAVQS. The interval 110–328 is domain III, AAA+ region; sequence DLNPKYSFDN…GALKDISLVA (219 aa). ATP-binding residues include Gly-154, Gly-156, Lys-157, and Thr-158. The domain IV, binds dsDNA stretch occupies residues 329 to 450; it reads NFKQIDTITV…EIETIKNKIK (122 aa).

This sequence belongs to the DnaA family. In terms of assembly, oligomerizes as a right-handed, spiral filament on DNA at oriC.

The protein resides in the cytoplasm. In terms of biological role, plays an essential role in the initiation and regulation of chromosomal replication. ATP-DnaA binds to the origin of replication (oriC) to initiate formation of the DNA replication initiation complex once per cell cycle. Binds the DnaA box (a 9 base pair repeat at the origin) and separates the double-stranded (ds)DNA. Forms a right-handed helical filament on oriC DNA; dsDNA binds to the exterior of the filament while single-stranded (ss)DNA is stabiized in the filament's interior. The ATP-DnaA-oriC complex binds and stabilizes one strand of the AT-rich DNA unwinding element (DUE), permitting loading of DNA polymerase. After initiation quickly degrades to an ADP-DnaA complex that is not apt for DNA replication. Binds acidic phospholipids. This Streptococcus equi subsp. zooepidemicus (strain H70) protein is Chromosomal replication initiator protein DnaA.